Here is a 303-residue protein sequence, read N- to C-terminus: Phytochrome-associated serine/threonine-protein phosphatase 1 (303 aa).

Zn(2+) contacts are provided by D50, H52, D78, and N110. H111 functions as the Proton donor in the catalytic mechanism. H160 and H234 together coordinate Zn(2+).

This sequence belongs to the PPP phosphatase family. PP-6 (PP-V) subfamily. As to quaternary structure, interacts with PHYA and PHYB, mostly when they are phosphorylated and in Pfr forms. Interacts with TAP46. Interacts with PIN1 and PIN2. Interacts with ABI5. Interacts with PIF3 and PIF4. Protein phosphatase 6 (PP6) holoenzyme is a heterotrimeric complex formed by the catalytic subunit FYPP, a SAPS domain-containing subunit (SAL) and a protein phosphatase 2A regulatory subunit A (PP2AA). Requires Zn(2+) as cofactor. Mostly expressed in flowers. Also detected to a lower extent in stems and leaves. Expressed in roots.

It localises to the cytoplasm. The enzyme catalyses O-phospho-L-seryl-[protein] + H2O = L-seryl-[protein] + phosphate. It carries out the reaction O-phospho-L-threonyl-[protein] + H2O = L-threonyl-[protein] + phosphate. In terms of biological role, catalytic subunit of protein phosphatase 6 (PP6). Dephosphorylates phosphorylated phytochromes, with a preference toward Pfr forms. Plays a major role in the photoperiodic control of flowering time in long days by modulating phytochrome signals in flowering time control. Involved in the regulation of polar auxin transport in roots. Dephosphorylates directly the auxin efflux carriers PIN1 and PIN2, thus promoting their proper polar localization in root cell plasma membrane. Acts antagonistically with the protein kinase PID to regulate the reversible phosphorylation of PIN and polar targeting, subsequently impacting polar auxin transport and plant development. Involved in the regulation of abscisic acid (ABA) signaling during seed germination and postgermination seedling growth. Functions as a negative regulator of ABA signaling through direct dephosphorylation and destabilization of ABI5. Acts antagonistically with the protein kinase SRK2E/SNRK2.6 to regulate ABI5 phosphorylation and ABA responses. Involved in the regulation of phosphorylation status in hypocotyl phototropism. Involved in the negative regulation of photomorphogenesis by controlling the stability and transcriptional activity of PIF3 and PIF4 proteins in the dark, via the regulation of their phosphorylation status. The protein is Phytochrome-associated serine/threonine-protein phosphatase 1 of Arabidopsis thaliana (Mouse-ear cress).